Reading from the N-terminus, the 310-residue chain is U-megalopygitoxin(8)-Mo15 (310 aa).

An N-terminal signal peptide occupies residues 1–27 (MARFSSKNLTKLFQYLVLSLLSPVAFG).

The protein belongs to the megalysin family. Contains 3 disulfide bonds. As to expression, expressed by the venom apparatus.

It is found in the secreted. The protein resides in the target cell membrane. May function as a large pore-forming protein. The chain is U-megalopygitoxin(8)-Mo15 from Megalopyge opercularis (Southern flannel moth).